A 607-amino-acid chain; its full sequence is Branchpoint-bridging protein (607 aa).

Polar residues-rich tracts occupy residues 1–15 (MSWR…NNIP) and 35–45 (VTPSAPSSVTN). Disordered regions lie at residues 1–92 (MSWR…TENK) and 134–155 (VPAD…GRRV). Over residues 46–76 (GDRDRDRDGPVYSNDRDVKRGRSPERSEDGP) the composition is skewed to basic and acidic residues. Residues 201–281 (YVPVNDYPEI…EKVNKAKKLI (81 aa)) enclose the KH domain. CCHC-type zinc fingers lie at residues 319-336 (QACQ…DCPE) and 344-361 (IICR…DCPD). Disordered stretches follow at residues 363–390 (QRGA…GGDA) and 407–607 (AAPA…PPGA). Over residues 373–389 (PGAGRTAGRIGSSGGGD) the composition is skewed to gly residues. The span at 472-500 (ARDRNERRHDDRDRGDSYYGGDRRHDDYG) shows a compositional bias: basic and acidic residues. Over residues 521 to 533 (SAPAIPTAPAYPG) the composition is skewed to low complexity. A compositionally biased stretch (gly residues) spans 534-545 (AYGGYPGYGAPP). Pro residues-rich tracts occupy residues 550–563 (APPP…PGAP) and 581–607 (APPP…PPGA).

The protein belongs to the BBP/SF1 family.

It is found in the nucleus. In terms of biological role, necessary for the splicing of pre-mRNA. Has a role in the recognition of the branch site (5'-UACUAAC-3'), the pyrimidine tract and the 3'-splice site at the 3'-end of introns. The polypeptide is Branchpoint-bridging protein (bbp-1) (Neurospora crassa (strain ATCC 24698 / 74-OR23-1A / CBS 708.71 / DSM 1257 / FGSC 987)).